Reading from the N-terminus, the 150-residue chain is 3-hydroxyacyl-[acyl-carrier-protein] dehydratase FabZ (150 aa).

His-52 is a catalytic residue.

This sequence belongs to the thioester dehydratase family. FabZ subfamily.

It is found in the cytoplasm. It carries out the reaction a (3R)-hydroxyacyl-[ACP] = a (2E)-enoyl-[ACP] + H2O. Its function is as follows. Involved in unsaturated fatty acids biosynthesis. Catalyzes the dehydration of short chain beta-hydroxyacyl-ACPs and long chain saturated and unsaturated beta-hydroxyacyl-ACPs. This Variovorax paradoxus (strain S110) protein is 3-hydroxyacyl-[acyl-carrier-protein] dehydratase FabZ.